The primary structure comprises 462 residues: NADH-quinone oxidoreductase subunit N (462 aa).

A run of 13 helical transmembrane segments spans residues 15 to 35 (LSYP…CSGF), 42 to 62 (FYIG…LNNA), 80 to 100 (IVSF…LLMQ), 113 to 133 (LFMI…LIFI), 161 to 181 (YFSI…FIYL), 204 to 224 (LLGA…LAPF), 239 to 259 (LVAF…IRLF), 267 to 287 (FEYI…FAAL), 295 to 315 (MFAY…IPLL), 323 to 343 (ILLA…AVFM), 366 to 386 (IAFC…FGVF), 396 to 416 (VILN…VIML), and 441 to 461 (FIQN…ILLM).

Belongs to the complex I subunit 2 family. NDH-1 is composed of 14 different subunits. Subunits NuoA, H, J, K, L, M, N constitute the membrane sector of the complex.

The protein localises to the cell inner membrane. The enzyme catalyses a quinone + NADH + 5 H(+)(in) = a quinol + NAD(+) + 4 H(+)(out). NDH-1 shuttles electrons from NADH, via FMN and iron-sulfur (Fe-S) centers, to quinones in the respiratory chain. The immediate electron acceptor for the enzyme in this species is believed to be ubiquinone. Couples the redox reaction to proton translocation (for every two electrons transferred, four hydrogen ions are translocated across the cytoplasmic membrane), and thus conserves the redox energy in a proton gradient. The chain is NADH-quinone oxidoreductase subunit N from Campylobacter jejuni (strain RM1221).